Reading from the N-terminus, the 272-residue chain is Oligodendrocyte transcription factor 3 (272 aa).

Residues 1-14 are compositionally biased toward low complexity; it reads MNSDSSSVSSRASS. The interval 1–71 is disordered; it reads MNSDSSSVSS…KAAGESSKYK (71 aa). A compositionally biased stretch (basic residues) spans 24–33; that stretch reads DHHHRHHHHQ. Residues 36–46 show a composition bias toward polar residues; it reads RLNSVSSTQGD. Residues 68–89 are a coiled coil; sequence SKYKIKKQLSEQDLQQLRLKIN. The bHLH domain occupies 83 to 137; the sequence is QLRLKINGRERKRMHDLNLAMDGLREVMPYAHGPSVRKLSKIATLLLARNYILML.

The protein resides in the nucleus. Functionally, may determine the distinct specification program of class A neurons in the dorsal part of the spinal cord and suppress specification of class B neurons. This chain is Oligodendrocyte transcription factor 3 (OLIG3), found in Homo sapiens (Human).